Reading from the N-terminus, the 756-residue chain is MSTESKCPFNHAAGGGTTNRDWWPKQLNLKILHQHSTLSDPMGENFDYAKEFKSLDIEAVKQDLRNVMTQSQDWWPADFGHYGPLFIRMAWHSAGTYRTGDGRGGAGAGQQRFAPLNSWPDNVSLDKARRLIWPVKQKYGRKISWADLIVLTGNVALESMGFKTFGFSGGRADVWEPEEDVYWGSETTWLGGEERYGAQKKMQQPGDGTLVAEPENHANEESRTASGERNLENPLAAVQMGLIYVNPEGPEGVPDPVASARDIRETFGRMAMNDEETVALIAGGHAFGKTHGAGPADNVGPEPEAAGLEEQGLGWRNKFGSGKGGDTITSGLEVTWTSTPTKWSNEYLENLFGFEWELTKSPAGAHQWTPKNGAGAGKIPDAHDPSKRHAPSMLTSDLALRFDPAYEQISRRFLNNPEQLADAFARAWFKLTHRDMGPLARYLGPETPAEELLWQDPIPSVDHALVDDQDVATLKAKILASGLSVSQLVSTAWAAASTFRGSDKRGGANGGRLRLAPQKDWAVNQPEQLAGVLKTLEGIQSEFNAAQSGGKKVSIADLIVLAGNAGVEQAAKNAGQHVTVPFAPGRADASQEQTDVESFSFLEPIADGFRNYQKGHYKVSAESLLVDKAQLLTLTAPEMTVLLGGLRVLNINVGQSKHGVFTDQPGTLTNDFFKNLLDMGVEWKATAGGTDTFEARDRKTGAVKWTGTRVDLVFGSHAQLRAISEVYGSSDAHEKFVKDFVAVWTKVMNLDRFDLA.

The segment at residues 91–244 is a cross-link (tryptophyl-tyrosyl-methioninium (Trp-Tyr) (with M-270)); it reads WHSAGTYRTG…LAAVQMGLIY (154 aa). The Proton acceptor role is filled by His-92. A disordered region spans residues 198–230; the sequence is AQKKMQQPGDGTLVAEPENHANEESRTASGERN. Residues 214–223 show a composition bias toward basic and acidic residues; the sequence is PENHANEESR. Positions 244–270 form a cross-link, tryptophyl-tyrosyl-methioninium (Tyr-Met) (with W-91); the sequence is YVNPEGPEGVPDPVASARDIRETFGRM. His-285 provides a ligand contact to heme b.

The protein belongs to the peroxidase family. Peroxidase/catalase subfamily. Homodimer or homotetramer. It depends on heme b as a cofactor. Formation of the three residue Trp-Tyr-Met cross-link is important for the catalase, but not the peroxidase activity of the enzyme.

It catalyses the reaction H2O2 + AH2 = A + 2 H2O. The catalysed reaction is 2 H2O2 = O2 + 2 H2O. Functionally, bifunctional enzyme with both catalase and broad-spectrum peroxidase activity. The chain is Catalase-peroxidase from Pseudomonas syringae pv. syringae (strain B728a).